Here is a 320-residue protein sequence, read N- to C-terminus: o-succinylbenzoate synthase (320 aa).

The active-site Proton donor is K133. Mg(2+) contacts are provided by D161, E190, and D213. Catalysis depends on K235, which acts as the Proton acceptor.

This sequence belongs to the mandelate racemase/muconate lactonizing enzyme family. MenC type 1 subfamily. A divalent metal cation is required as a cofactor.

The enzyme catalyses (1R,6R)-6-hydroxy-2-succinyl-cyclohexa-2,4-diene-1-carboxylate = 2-succinylbenzoate + H2O. It functions in the pathway quinol/quinone metabolism; 1,4-dihydroxy-2-naphthoate biosynthesis; 1,4-dihydroxy-2-naphthoate from chorismate: step 4/7. It participates in quinol/quinone metabolism; menaquinone biosynthesis. Functionally, converts 2-succinyl-6-hydroxy-2,4-cyclohexadiene-1-carboxylate (SHCHC) to 2-succinylbenzoate (OSB). This is o-succinylbenzoate synthase from Shigella flexneri.